Consider the following 159-residue polypeptide: Phosphopantetheine adenylyltransferase (159 aa).

Thr-10 contacts substrate. ATP contacts are provided by residues 10–11 and His-18; that span reads TF. 3 residues coordinate substrate: Lys-42, Met-74, and Arg-88. ATP is bound by residues 89 to 91, Glu-99, and 124 to 130; these read GLR and WSFISSS.

Belongs to the bacterial CoaD family. Homohexamer. Mg(2+) serves as cofactor.

It is found in the cytoplasm. The catalysed reaction is (R)-4'-phosphopantetheine + ATP + H(+) = 3'-dephospho-CoA + diphosphate. It participates in cofactor biosynthesis; coenzyme A biosynthesis; CoA from (R)-pantothenate: step 4/5. Its function is as follows. Reversibly transfers an adenylyl group from ATP to 4'-phosphopantetheine, yielding dephospho-CoA (dPCoA) and pyrophosphate. This chain is Phosphopantetheine adenylyltransferase, found in Klebsiella pneumoniae (strain 342).